A 500-amino-acid chain; its full sequence is NAD(P)H-quinone oxidoreductase chain 4, chloroplastic (500 aa).

14 helical membrane-spanning segments follow: residues 4-24 (FPWLTILVVLPIFAGSLIFFL), 37-57 (MSICLLEFLLMTYAFCYHFQL), 87-107 (LGSILLTGFMTTLATLAAWPV), 113-130 (LFYFLMLAMYSGQIGLFS), 134-154 (LLLFFIMWELELIPVYLLLSM), 167-187 (FILYTAGGSIFFLIGVLGMGL), 211-231 (ILFYFGFLIAYAVKLPIIPLH), 242-262 (HYSTCMLLAGILLKMGAYGLI), 272-292 (AHYLFSPWLVIIGAMQIIYAA), 313-333 (MGFIIIGIGSITNIGLNGAIL), 334-354 (QILSHGFIGATLFFLAGTACD), 386-406 (LALPGMSGFVAELVVFFGLIT), 417-437 (LITFVMAIGMILTPIYLLSML), and 462-482 (LFLLICIFLPVIGIGIYPDFV).

This sequence belongs to the complex I subunit 4 family.

Its subcellular location is the plastid. It is found in the chloroplast thylakoid membrane. It carries out the reaction a plastoquinone + NADH + (n+1) H(+)(in) = a plastoquinol + NAD(+) + n H(+)(out). The catalysed reaction is a plastoquinone + NADPH + (n+1) H(+)(in) = a plastoquinol + NADP(+) + n H(+)(out). The polypeptide is NAD(P)H-quinone oxidoreductase chain 4, chloroplastic (Oryza nivara (Indian wild rice)).